A 559-amino-acid chain; its full sequence is Cation/calcium exchanger 2 (559 aa).

Helical transmembrane passes span Phe-10–Thr-30, Gly-86–Leu-106, Val-131–Val-151, Thr-167–Leu-187, Ile-203–Asn-223, Phe-224–Ser-244, Trp-331–Trp-351, Ala-362–Ala-382, Trp-393–Ala-413, Leu-416–Leu-436, Phe-480–Ile-500, Leu-506–Ser-526, and Leu-531–Ile-551.

This sequence belongs to the Ca(2+):cation antiporter (CaCA) (TC 2.A.19) family. Cation/calcium exchanger (CCX) subfamily.

It localises to the membrane. Membrane-localized H(+)-dependent K(+) and Na(+) transporter. This chain is Cation/calcium exchanger 2 (CCX2), found in Arabidopsis thaliana (Mouse-ear cress).